A 479-amino-acid chain; its full sequence is Ribosomal RNA small subunit methyltransferase F (479 aa).

Residues 125 to 131, glutamate 149, aspartate 176, and aspartate 194 contribute to the S-adenosyl-L-methionine site; that span reads AAAPGSK. Cysteine 247 (nucleophile) is an active-site residue.

It belongs to the class I-like SAM-binding methyltransferase superfamily. RsmB/NOP family.

The protein resides in the cytoplasm. The catalysed reaction is cytidine(1407) in 16S rRNA + S-adenosyl-L-methionine = 5-methylcytidine(1407) in 16S rRNA + S-adenosyl-L-homocysteine + H(+). Functionally, specifically methylates the cytosine at position 1407 (m5C1407) of 16S rRNA. The chain is Ribosomal RNA small subunit methyltransferase F from Escherichia coli O6:H1 (strain CFT073 / ATCC 700928 / UPEC).